The following is a 213-amino-acid chain: Cytochrome c biogenesis ATP-binding export protein CcmA (213 aa).

Residues 3-211 form the ABC transporter domain; it reads LTAENLGVRR…QMTGFAGVET (209 aa). Residue 35–42 participates in ATP binding; that stretch reads GRNGSGKS.

The protein belongs to the ABC transporter superfamily. CcmA exporter (TC 3.A.1.107) family. In terms of assembly, the complex is composed of two ATP-binding proteins (CcmA) and two transmembrane proteins (CcmB).

The protein localises to the cell inner membrane. It catalyses the reaction heme b(in) + ATP + H2O = heme b(out) + ADP + phosphate + H(+). Its function is as follows. Part of the ABC transporter complex CcmAB involved in the biogenesis of c-type cytochromes; once thought to export heme, this seems not to be the case, but its exact role is uncertain. Responsible for energy coupling to the transport system. This chain is Cytochrome c biogenesis ATP-binding export protein CcmA, found in Agrobacterium fabrum (strain C58 / ATCC 33970) (Agrobacterium tumefaciens (strain C58)).